Reading from the N-terminus, the 309-residue chain is Serine/threonine-protein phosphatase 2A catalytic subunit alpha isoform (309 aa).

The Mn(2+) site is built by D57, H59, D85, and N117. Zn(2+) is bound by residues D57, H59, and D85. D85 and N117 together coordinate Fe(3+). Catalysis depends on H118, which acts as the Proton donor. Mn(2+) contacts are provided by H167 and H241. Fe(3+) is bound by residues H167 and H241. Y307 bears the Phosphotyrosine mark. L309 is subject to Leucine methyl ester.

Belongs to the PPP phosphatase family. PP-1 subfamily. As to quaternary structure, PP2A consists of a common heterodimeric core enzyme, composed of PPP2CA, a 36 kDa catalytic subunit (subunit C), and PPP2R1A, a 65 kDa constant regulatory subunit (PR65 or subunit A), that associates with a variety of regulatory subunits. Proteins that associate with the core dimer include three families of regulatory subunits B (the R2/B/PR55/B55, R3/B''/PR72/PR130/PR59 and R5/B'/B56 families), the 48 kDa variable regulatory subunit, viral proteins, and cell signaling molecules. May indirectly interact with SGOL1, most probably through regulatory B56 subunits. Phosphatase component of the Integrator-PP2A (INTAC) complex, composed of the Integrator core complex and protein phosphatase 2A subunits PPP2CA and PPP2R1A. Mn(2+) serves as cofactor. The cofactor is Fe(3+). Requires Zn(2+) as cofactor. Reversibly methyl esterified on Leu-309 by leucine carboxyl methyltransferase 1 (LCMT1) and protein phosphatase methylesterase 1 (PPME1). Carboxyl methylation influences the affinity of the catalytic subunit for the different regulatory subunits, thereby modulating the PP2A holoenzyme's substrate specificity, enzyme activity and cellular localization. Post-translationally, phosphorylation of either threonine (by autophosphorylation-activated protein kinase) or tyrosine results in inactivation of the phosphatase. Auto-dephosphorylation has been suggested as a mechanism for reactivation.

The protein localises to the cytoplasm. Its subcellular location is the nucleus. The protein resides in the chromosome. It is found in the centromere. It localises to the cytoskeleton. The protein localises to the spindle pole. It catalyses the reaction O-phospho-L-seryl-[protein] + H2O = L-seryl-[protein] + phosphate. The enzyme catalyses O-phospho-L-threonyl-[protein] + H2O = L-threonyl-[protein] + phosphate. Inhibited by the interaction between PPP2R2A and ARPP19; this inhibition is enhanced when ARPP19 is phosphorylated. Inhibited by the interaction between PPP2R2A and PABIR1/FAM122A. Functionally, PP2A is the major phosphatase for microtubule-associated proteins (MAPs). PP2A can modulate the activity of phosphorylase B kinase casein kinase 2, mitogen-stimulated S6 kinase, and MAP-2 kinase. Key mediator of a quality checkpoint during transcription elongation as part of the Integrator-PP2A (INTAC) complex. The INTAC complex drives premature transcription termination of transcripts that are unfavorably configured for transcriptional elongation: within the INTAC complex, PPP2CA catalyzes dephosphorylation of the C-terminal domain (CTD) of Pol II subunit POLR2A/RPB1 and SUPT5H/SPT5, thereby preventing transcriptional elongation. The polypeptide is Serine/threonine-protein phosphatase 2A catalytic subunit alpha isoform (PPP2CA) (Gallus gallus (Chicken)).